We begin with the raw amino-acid sequence, 201 residues long: NAD(P)H quinone oxidoreductase PST2 (201 aa).

The Flavodoxin-like domain maps to 6–192; the sequence is VAIIIYSLYH…SIAQQQGEDF (187 aa). Residues 12 to 16 and 112 to 164 contribute to the FMN site; these read SLYHH and VFVS…SPWG.

The protein belongs to the WrbA family. FMN serves as cofactor.

It localises to the cell membrane. It catalyses the reaction a quinone + NADH + H(+) = a quinol + NAD(+). The enzyme catalyses a quinone + NADPH + H(+) = a quinol + NADP(+). Flavodoxin-like protein (FLP) that plays a role in cell wall integrity, oxidative stress protection and virulence. FLPs act as NAD(P)H quinone oxidoreductases. Reduces ubiquinone (coenzyme Q), enabling it to serve as an antioxidant in the membrane. The sequence is that of NAD(P)H quinone oxidoreductase PST2 from Candida albicans (strain SC5314 / ATCC MYA-2876) (Yeast).